We begin with the raw amino-acid sequence, 539 residues long: Glucose-6-phosphate isomerase (539 aa).

Catalysis depends on Glu349, which acts as the Proton donor. Catalysis depends on residues His380 and Lys508. The segment at 519 to 539 (ESGASGQHDPSTAGLIQRLKR) is disordered.

Belongs to the GPI family.

Its subcellular location is the cytoplasm. The enzyme catalyses alpha-D-glucose 6-phosphate = beta-D-fructose 6-phosphate. Its pathway is carbohydrate biosynthesis; gluconeogenesis. The protein operates within carbohydrate degradation; glycolysis; D-glyceraldehyde 3-phosphate and glycerone phosphate from D-glucose: step 2/4. Its function is as follows. Catalyzes the reversible isomerization of glucose-6-phosphate to fructose-6-phosphate. This chain is Glucose-6-phosphate isomerase, found in Caulobacter vibrioides (strain ATCC 19089 / CIP 103742 / CB 15) (Caulobacter crescentus).